Consider the following 418-residue polypeptide: Tyrosine--tRNA ligase 1 (418 aa).

Residue Tyr34 coordinates L-tyrosine. The 'HIGH' region motif lies at 39–48 (PTADSLHLGH). L-tyrosine is bound by residues Tyr169 and Gln173. Positions 229 to 233 (KFGKS) match the 'KMSKS' region motif. Lys232 is an ATP binding site. The region spanning 352–418 (LNIVELLVNA…GKKKNFVLTY (67 aa)) is the S4 RNA-binding domain.

It belongs to the class-I aminoacyl-tRNA synthetase family. TyrS type 1 subfamily. In terms of assembly, homodimer.

It localises to the cytoplasm. It carries out the reaction tRNA(Tyr) + L-tyrosine + ATP = L-tyrosyl-tRNA(Tyr) + AMP + diphosphate + H(+). Catalyzes the attachment of tyrosine to tRNA(Tyr) in a two-step reaction: tyrosine is first activated by ATP to form Tyr-AMP and then transferred to the acceptor end of tRNA(Tyr). This is Tyrosine--tRNA ligase 1 from Streptococcus thermophilus (strain CNRZ 1066).